Consider the following 451-residue polypeptide: Probable glycine dehydrogenase (decarboxylating) subunit 1 (451 aa).

Belongs to the GcvP family. N-terminal subunit subfamily. In terms of assembly, the glycine cleavage system is composed of four proteins: P, T, L and H. In this organism, the P 'protein' is a heterodimer of two subunits.

The catalysed reaction is N(6)-[(R)-lipoyl]-L-lysyl-[glycine-cleavage complex H protein] + glycine + H(+) = N(6)-[(R)-S(8)-aminomethyldihydrolipoyl]-L-lysyl-[glycine-cleavage complex H protein] + CO2. Its function is as follows. The glycine cleavage system catalyzes the degradation of glycine. The P protein binds the alpha-amino group of glycine through its pyridoxal phosphate cofactor; CO(2) is released and the remaining methylamine moiety is then transferred to the lipoamide cofactor of the H protein. The sequence is that of Probable glycine dehydrogenase (decarboxylating) subunit 1 from Thioalkalivibrio sulfidiphilus (strain HL-EbGR7).